The following is a 274-amino-acid chain: 2,3,4,5-tetrahydropyridine-2,6-dicarboxylate N-succinyltransferase (274 aa).

Positions 104 and 141 each coordinate substrate.

It belongs to the transferase hexapeptide repeat family. Homotrimer.

It localises to the cytoplasm. It catalyses the reaction (S)-2,3,4,5-tetrahydrodipicolinate + succinyl-CoA + H2O = (S)-2-succinylamino-6-oxoheptanedioate + CoA. The protein operates within amino-acid biosynthesis; L-lysine biosynthesis via DAP pathway; LL-2,6-diaminopimelate from (S)-tetrahydrodipicolinate (succinylase route): step 1/3. In Idiomarina loihiensis (strain ATCC BAA-735 / DSM 15497 / L2-TR), this protein is 2,3,4,5-tetrahydropyridine-2,6-dicarboxylate N-succinyltransferase.